A 1683-amino-acid polypeptide reads, in one-letter code: MRCIGISNRDFVEGVSGGSWVDIVLEHGSCVTTMAKNKPTLDFELIKTEAKQPATLRKYCIEAKLTNTTTDSRCPTQGEPTLNEEQDKRFVCKHSMVDRGWGNGCGLFGKGGIVTCAMFTCKKNMEGKIVQPENLEYTVVITPHSGEEHAVGNDTGKHGKEVKITPQSSITEAELTGYGTVTMECSPRTGLDFNEMVLLQMEDKAWLVHRQWFLDLPLPWLPGADTQGSNWIQKETLVTFKNPHAKKQDVVVLGSQEGAMHTALTGATEIQMSSGNLLFTGHLKCRLRMDKLQLKGMSYSMCTGKFKIVKEIAETQHGTIVIRVQYEGDGSPCKIPFEIMDLEKRHVLGRLITVNPIVTEKDSPVNIEAEPPFGDSYIIIGVEPGQLKLDWFKKGSSIGQMFETTMRGAKRMAILGDTAWDFGSLGGVFTSIGKALHQVFGAIYGAAFSGVSWTMKILIGVIITWIGMNSRSTSLSVSLVLVGIVTLYLGVMVQADSGCVVSWKNKELKCGSGIFVTDNVHTWTEQYKFQPESPSKLASAIQKAHEEGICGIRSVTRLENLMWKQITSELNHILSENEVKLTIMTGDIKGIMQVGKRSLRPQPTELRYSWKTWGKAKMLSTELHNQTFLIDGPETAECPNTNRAWNSLEVEDYGFGVFTTNIWLRLREKQDVFCDSKLMSAAIKDNRAVHADMGYWIESALNDTWKIEKASFIEVKSCHWPKSHTLWSNGVLESEMVIPKNFAGPVSQHNNRPGYYTQTAGPWHLGKLEMDFDFCEGTTVVVTEDCGNRGPSLRTTTASGKLITEWCCRSCTLPPLRYRGEDGCWYGMEIRPLKEKEENLVSSLVTAGHGQIDNFSLGILGMALFLEEMLRTRVGTKHAILLVAVSFVTLITGNMSFRDLGRVMVMVGATMTDDIGMGVTYLALLAAFRVRPTFAAGLLLRKLTSKELMMTTIGIVLLSQSSIPETILELTDALALGMMVLKMVRNMEKYQLAVTIMAILCVPNAVILQNAWKVSCTILAVVSVSPLLLTSSQQKADWIPLALTIKGLNPTAIFLTTLSRTSKKRAGVLWDVPSPPPVGKAELEDGAYRIKQKGILGYSQIGAGVYKEGTFHTMWHVTRGAVLMHKGKRIEPSWADVKKDLISYGGGWKLEGEWKEGEEVQVLALEPGKNPRAVQTKPGLFRTNTGTIGAVSLDFSPGTSGSPIVDKKGKVVGLYGNGVVTRSGAYVSAIAQTEKSIEDNPEIEDDIFRKRRLTIMDLHPGAGKTKRYLPAIVREAIKRGLRTLILAPTRVVAAEMEEALRGLPIRYQTPAIRAEHTGREIVDLMCHATFTMRLLSPIRVPNYNLIIMDEAHFTDPASIAARGYISTRVEMGEAAGIFMTATPPGSRDPFPQSNAPIMDEEREIPERSWNSGHEWVTDFKGKTVWFVPSIKTGNDIAACLRKNGKRVIQLSRKTFDSEYVKTRTNDWDFVVTTDISEMGANFKAERVIDPRRCMKPVILTDGEERVILAGPMPVTHSSAAQRRGRIGRNPRNENDQYIYMGEPLENDEDCAHWKEAKMLLDNINTPEGIIPSIFEPEREKVDAIDGEYRLRGEARKTFVDLMRRGDLPVWLAYKVAAEGINYADRRWCFDGTRNNQILEENVEVEIWTKEGERKKLKPRWLDARIYSDPLALKEFKEFAAGRK.

Residues 1-445 are Extracellular-facing; that stretch reads MRCIGISNRD…LHQVFGAIYG (445 aa). 4 disulfide bridges follow: C3/C30, C60/C121, C74/C105, and C92/C116. N67 is a glycosylation site (N-linked (GlcNAc...) asparagine; by host). The segment at 98–111 is fusion peptide; sequence DRGWGNGCGLFGKG. N-linked (GlcNAc...) asparagine; by host glycosylation occurs at N153. Disulfide bonds link C185–C285 and C302–C333. A helical transmembrane segment spans residues 446–466; that stretch reads AAFSGVSWTMKILIGVIITWI. At 467–472 the chain is on the cytoplasmic side; it reads GMNSRS. A helical membrane pass occupies residues 473 to 493; that stretch reads TSLSVSLVLVGIVTLYLGVMV. Over 494–915 the chain is Extracellular; it reads QADSGCVVSW…MVGATMTDDI (422 aa). Intrachain disulfides connect C499-C510, C550-C638, C674-C718, C775-C824, C786-C808, and C807-C811. Residue N702 is glycosylated (N-linked (GlcNAc...) asparagine; by host). A helical transmembrane segment spans residues 916 to 940; the sequence is GMGVTYLALLAAFRVRPTFAAGLLL. The Cytoplasmic portion of the chain corresponds to 941–946; that stretch reads RKLTSK. Residues 947–965 traverse the membrane as a helical segment; the sequence is ELMMTTIGIVLLSQSSIPE. Topologically, residues 966–989 are lumenal; that stretch reads TILELTDALALGMMVLKMVRNMEK. Residues 990 to 1010 traverse the membrane as a helical segment; that stretch reads YQLAVTIMAILCVPNAVILQN. Position 1011 (A1011) is a topological domain, cytoplasmic. A helical transmembrane segment spans residues 1012 to 1030; sequence WKVSCTILAVVSVSPLLLT. The Lumenal segment spans residues 1031–1037; that stretch reads SSQQKAD. The chain crosses the membrane as a helical span at residues 1038–1058; it reads WIPLALTIKGLNPTAIFLTTL. Topologically, residues 1059–1683 are cytoplasmic; that stretch reads SRTSKKRAGV…EFKEFAAGRK (625 aa). In terms of domain architecture, Peptidase S7 spans 1066 to 1243; that stretch reads AGVLWDVPSP…EKSIEDNPEI (178 aa). Residues H1116, D1140, and S1200 each act as charge relay system; for serine protease NS3 activity in the active site. In terms of domain architecture, Helicase ATP-binding spans 1245–1401; the sequence is DDIFRKRRLT…QSNAPIMDEE (157 aa). The tract at residues 1249–1252 is important for RNA-binding; the sequence is RKRR. 1258 to 1265 contributes to the ATP binding site; the sequence is LHPGAGKT. A DEAH box motif is present at residues 1349–1352; that stretch reads DEAH. The Helicase C-terminal domain maps to 1411-1582; that stretch reads SGHEWVTDFK…IFEPEREKVD (172 aa).

Capsid protein C: Homodimer. Interacts (via N-terminus) with host EXOC1 (via C-terminus); this interaction results in EXOC1 degradation through the proteasome degradation pathway. Protein prM: Forms heterodimers with envelope protein E in the endoplasmic reticulum and Golgi. In terms of assembly, homodimer; in the endoplasmic reticulum and Golgi. Interacts with protein prM. Interacts with non-structural protein 1. As to quaternary structure, homodimer; Homohexamer when secreted. Interacts with envelope protein E. Interacts (via N-terminus) with serine protease NS3. Non-structural protein 2B: Forms a heterodimer with serine protease NS3. May form homooligomers. In terms of assembly, forms a heterodimer with NS2B. Interacts with NS4B. Interacts with unphosphorylated RNA-directed RNA polymerase NS5; this interaction stimulates RNA-directed RNA polymerase NS5 guanylyltransferase activity. Interacts with host SHFL. Specific enzymatic cleavages in vivo yield mature proteins. Cleavages in the lumen of endoplasmic reticulum are performed by host signal peptidase, wereas cleavages in the cytoplasmic side are performed by the Serine protease NS3. Signal cleavage at the 2K-4B site requires a prior NS3 protease-mediated cleavage at the 4A-2K site. Post-translationally, N-glycosylated. The excreted form is glycosylated and this is required for efficient secretion of the protein from infected cells. In terms of processing, N-glycosylated. Specific enzymatic cleavages in vivo yield mature proteins. Cleavages in the lumen of endoplasmic reticulum are performed by host signal peptidase, wereas cleavages in the cytoplasmic side are performed by serine protease NS3. Signal cleavage at the 2K-4B site requires a prior NS3 protease-mediated cleavage at the 4A-2K site.

It is found in the virion membrane. Its subcellular location is the host endoplasmic reticulum membrane. The protein localises to the secreted. The catalysed reaction is Selective hydrolysis of -Xaa-Xaa-|-Yaa- bonds in which each of the Xaa can be either Arg or Lys and Yaa can be either Ser or Ala.. It carries out the reaction a ribonucleoside 5'-triphosphate + H2O = a ribonucleoside 5'-diphosphate + phosphate + H(+). It catalyses the reaction ATP + H2O = ADP + phosphate + H(+). Its function is as follows. Binds to host cell surface receptor and mediates fusion between viral and cellular membranes. Envelope protein is synthesized in the endoplasmic reticulum in the form of heterodimer with protein prM. They play a role in virion budding in the ER, and the newly formed immature particle is covered with 60 spikes composed of heterodimer between precursor prM and envelope protein E. The virion is transported to the Golgi apparatus where the low pH causes dissociation of PrM-E heterodimers and formation of E homodimers. prM-E cleavage is inefficient, and many virions are only partially matured. These uncleaved prM would play a role in immune evasion. Involved in immune evasion, pathogenesis and viral replication. Once cleaved off the polyprotein, is targeted to three destinations: the viral replication cycle, the plasma membrane and the extracellular compartment. Essential for viral replication. Required for formation of the replication complex and recruitment of other non-structural proteins to the ER-derived membrane structures. Excreted as a hexameric lipoparticle that plays a role against host immune response. Antagonizing the complement function. Binds to the host macrophages and dendritic cells. Inhibits signal transduction originating from Toll-like receptor 3 (TLR3). In terms of biological role, disrupts the host endothelial glycocalyx layer of host pulmonary microvascular endothelial cells, inducing degradation of sialic acid and shedding of heparan sulfate proteoglycans. NS1 induces expression of sialidases, heparanase, and activates cathepsin L, which activates heparanase via enzymatic cleavage. These effects are probably linked to the endothelial hyperpermeability observed in severe dengue disease. Functionally, component of the viral RNA replication complex that functions in virion assembly and antagonizes the host immune response. Its function is as follows. Serine protease subunit NS2B: Required cofactor for the serine protease function of NS3. May have membrane-destabilizing activity and form viroporins. Displays three enzymatic activities: serine protease, NTPase and RNA helicase. NS3 serine protease, in association with NS2B, performs its autocleavage and cleaves the polyprotein at dibasic sites in the cytoplasm: C-prM, NS2A-NS2B, NS2B-NS3, NS3-NS4A, NS4A-2K and NS4B-NS5. NS3 RNA helicase binds RNA and unwinds dsRNA in the 3' to 5' direction. The polypeptide is Genome polyprotein (Aedimorphus (Red guenon)).